The primary structure comprises 416 residues: UDP-N-acetylglucosamine 1-carboxyvinyltransferase (416 aa).

Residue 22–23 (KN) coordinates phosphoenolpyruvate. Arg91 lines the UDP-N-acetyl-alpha-D-glucosamine pocket. Cys115 serves as the catalytic Proton donor. Cys115 bears the 2-(S-cysteinyl)pyruvic acid O-phosphothioketal mark. Residues 120 to 124 (RPIDL), Asp305, and Ile327 contribute to the UDP-N-acetyl-alpha-D-glucosamine site.

It belongs to the EPSP synthase family. MurA subfamily.

It localises to the cytoplasm. The catalysed reaction is phosphoenolpyruvate + UDP-N-acetyl-alpha-D-glucosamine = UDP-N-acetyl-3-O-(1-carboxyvinyl)-alpha-D-glucosamine + phosphate. Its pathway is cell wall biogenesis; peptidoglycan biosynthesis. Functionally, cell wall formation. Adds enolpyruvyl to UDP-N-acetylglucosamine. This is UDP-N-acetylglucosamine 1-carboxyvinyltransferase from Buchnera aphidicola subsp. Acyrthosiphon pisum (strain APS) (Acyrthosiphon pisum symbiotic bacterium).